The following is a 672-amino-acid chain: DNA polymerase eta (672 aa).

Residues 14–254 form the UmuC domain; sequence IAHVDMDCFY…LPIKKMKQLG (241 aa). Asp-18 and Met-19 together coordinate Mg(2+). Mn(2+) contacts are provided by Asp-18 and Met-19. Residues Tyr-23 and Arg-60 each contribute to the a 2'-deoxyribonucleoside 5'-triphosphate site. The Mg(2+) site is built by Asp-120 and Glu-121. Positions 120 and 121 each coordinate Mn(2+). Glu-121 serves as the catalytic Proton acceptor. 2 DNA-binding regions span residues 318 to 325 and 362 to 383; these read KTFPGPRA and TLHA…PSKS. Disordered stretches follow at residues 521-617 and 648-672; these read VSCP…TDWG and QFNT…PLNR. 2 stretches are compositionally biased toward polar residues: residues 523–544 and 570–586; these read CPSN…TQTK and YNAT…DSTV. Composition is skewed to low complexity over residues 587–602 and 651–662; these read SSAS…SHNS and TGKSKGDGSTSS.

This sequence belongs to the DNA polymerase type-Y family. In terms of assembly, interacts with PCNA1 and PCNA2. The interaction with PCNA2 is required for translesion synthesis (TLS) to repair UV photoproducts. The cofactor is Mg(2+). Mn(2+) is required as a cofactor. In terms of tissue distribution, constitutively expressed in roots, stems, leaves, flowers and siliques.

It localises to the nucleus. The catalysed reaction is DNA(n) + a 2'-deoxyribonucleoside 5'-triphosphate = DNA(n+1) + diphosphate. The enzyme in complex with the DNA substrate binds a third divalent metal cation. The binding of this third divalent cation, which is coordinated by water molecules and two oxygen atoms from DNA and dNTP, is essential for catalyzing the DNA synthesis. Error-free DNA polymerase specifically involved in DNA repair. Plays an important role in translesion synthesis (TLS), where the normal high fidelity DNA polymerases cannot proceed and DNA synthesis stalls. Plays an important role in the repair of UV-induced pyrimidine dimers and confers resistance to ultraviolet light. Depending on the context, it inserts the correct base, but may cause base transitions and transversions. Forms a Schiff base with 5'-deoxyribose phosphate at abasic sites, but does not have lyase activity. Targets POLI to replication foci. Exhibits cyclobutane dimer nonmutagenic bypass activity in vitro. The protein is DNA polymerase eta (POLH) of Arabidopsis thaliana (Mouse-ear cress).